A 239-amino-acid chain; its full sequence is uncharacterized protein (239 aa).

The N-terminal stretch at 1-23 is a signal peptide; it reads MKTMVAMLLAAVGVAVSASSTLA. Basic and acidic residues predominate over residues 220 to 230; the sequence is AHPKQTLRDQR. Residues 220-239 are disordered; that stretch reads AHPKQTLRDQRPAGGDEITK.

This is an uncharacterized protein from Sinorhizobium fredii (strain NBRC 101917 / NGR234).